Here is a 183-residue protein sequence, read N- to C-terminus: MTATAQQLEFLKNSIKSIHDYPKPGILFRDVTSLLEDPKAYALSIELLVERYKNAGITKVVGTEARGFLFGAPVALGLGVGFVPVRKPRKLPRETIAESYELEYGTDQLEIHVDAIKPGDKVLVVDDLLATGGTIEATVKLIRRLGGEVTDAAFIINLFDLGGEQRLAKQGITCYSLVPFPGH.

This sequence belongs to the purine/pyrimidine phosphoribosyltransferase family. Homodimer.

It is found in the cytoplasm. The enzyme catalyses AMP + diphosphate = 5-phospho-alpha-D-ribose 1-diphosphate + adenine. Its pathway is purine metabolism; AMP biosynthesis via salvage pathway; AMP from adenine: step 1/1. In terms of biological role, catalyzes a salvage reaction resulting in the formation of AMP, that is energically less costly than de novo synthesis. The sequence is that of Adenine phosphoribosyltransferase from Citrobacter koseri (strain ATCC BAA-895 / CDC 4225-83 / SGSC4696).